The sequence spans 109 residues: Nucleoid-associated protein BCE_0021 (109 aa).

The protein belongs to the YbaB/EbfC family. In terms of assembly, homodimer.

It is found in the cytoplasm. The protein resides in the nucleoid. In terms of biological role, binds to DNA and alters its conformation. May be involved in regulation of gene expression, nucleoid organization and DNA protection. The chain is Nucleoid-associated protein BCE_0021 from Bacillus cereus (strain ATCC 10987 / NRS 248).